We begin with the raw amino-acid sequence, 431 residues long: Light-independent protochlorophyllide reductase subunit N (431 aa).

[4Fe-4S] cluster is bound by residues Cys29, Cys54, and Cys114.

It belongs to the BchN/ChlN family. In terms of assembly, protochlorophyllide reductase is composed of three subunits; ChlL, ChlN and ChlB. Forms a heterotetramer of two ChlB and two ChlN subunits. It depends on [4Fe-4S] cluster as a cofactor.

Its subcellular location is the plastid. It localises to the chloroplast. It catalyses the reaction chlorophyllide a + oxidized 2[4Fe-4S]-[ferredoxin] + 2 ADP + 2 phosphate = protochlorophyllide a + reduced 2[4Fe-4S]-[ferredoxin] + 2 ATP + 2 H2O. It participates in porphyrin-containing compound metabolism; chlorophyll biosynthesis (light-independent). Component of the dark-operative protochlorophyllide reductase (DPOR) that uses Mg-ATP and reduced ferredoxin to reduce ring D of protochlorophyllide (Pchlide) to form chlorophyllide a (Chlide). This reaction is light-independent. The NB-protein (ChlN-ChlB) is the catalytic component of the complex. The polypeptide is Light-independent protochlorophyllide reductase subunit N (Nephroselmis olivacea (Green alga)).